Reading from the N-terminus, the 537-residue chain is Beta-1-syntrophin (537 aa).

Alanine 2 bears the N-acetylalanine mark. PH domains lie at 18–297 (RAQR…SNAG) and 321–432 (EIRH…QGCH). Residues serine 86, serine 125, and serine 204 each carry the phosphoserine modification. One can recognise a PDZ domain in the interval 111–194 (GVKVLKQELG…EVLLEVKYMR (84 aa)). The tract at residues 204 to 233 (SPVSEIGWETPPPESPRLGGGSAEPLSSQS) is disordered. Threonine 213 is subject to Phosphothreonine. 5 positions are modified to phosphoserine: serine 218, serine 225, serine 231, serine 235, and serine 388. Residues 481–537 (PYEKLKMSSDDGIRMLYLDFGGKEGEIQLDLHSCPKPIVFIIHSFLSAKITRLGLVA) enclose the SU domain. The interval 517 to 537 (PIVFIIHSFLSAKITRLGLVA) is calmodulin-binding.

This sequence belongs to the syntrophin family. Monomer and homodimer. Interacts with the viral HTLV-1 TAX protein and other members of the syntrophin family: SNTA1 and SNTB2. Interacts with the dystrophin protein DMD and related proteins DTNA and UTRN and with the sodium channel proteins SCN4A and SCN5A. Interacts with DTNB. In terms of processing, phosphorylated by CaM-kinase II. In terms of tissue distribution, ubiquitous. Expressed at high levels in the liver.

The protein localises to the cell membrane. Its subcellular location is the sarcolemma. The protein resides in the cell junction. It localises to the cytoplasm. It is found in the cytoskeleton. Adapter protein that binds to and probably organizes the subcellular localization of a variety of membrane proteins. May link various receptors to the actin cytoskeleton and the dystrophin glycoprotein complex. The sequence is that of Beta-1-syntrophin (Sntb1) from Mus musculus (Mouse).